The sequence spans 307 residues: MWENFIEEKVKEIRETVGDGKAIIALSGGVDSSTAAVLAHRAIGDRLHAVFVNTGFMRKGEPEFVVKTFRDEFGLNLHYVDASERFFRELKGVTDPEEKRKIIGRVFIEVFEEVAKEINADFLIQGTIAPDWIESHGKIKSHHNVGGLPERLNLKLIEPLRDLYKDEVRELAKELGLPEKIYNRMPFPGPGLAVRVLGEVTPERVAIVREANAIVEEEIEKAGLKPWQAFAVLLGVKTVGVQGDIRAYKETVAVRVVESLDGMTANAMNVPWEVLQRIAFRITSEIPEVGRVLYDITNKPPATIEFE.

The region spanning 1–184 is the GMPS ATP-PPase domain; it reads MWENFIEEKV…LGLPEKIYNR (184 aa). 27–33 contributes to the ATP binding site; it reads SGGVDSS.

Heterodimer composed of a glutamine amidotransferase subunit (A) and a GMP-binding subunit (B).

The enzyme catalyses XMP + L-glutamine + ATP + H2O = GMP + L-glutamate + AMP + diphosphate + 2 H(+). Its pathway is purine metabolism; GMP biosynthesis; GMP from XMP (L-Gln route): step 1/1. Its function is as follows. Catalyzes the synthesis of GMP from XMP. This Thermococcus kodakarensis (strain ATCC BAA-918 / JCM 12380 / KOD1) (Pyrococcus kodakaraensis (strain KOD1)) protein is GMP synthase [glutamine-hydrolyzing] subunit B.